The primary structure comprises 518 residues: Glucose-1-phosphate adenylyltransferase large subunit 2, cytosolic (518 aa).

Belongs to the bacterial/plant glucose-1-phosphate adenylyltransferase family. Heterotetramer composed of two small and two large subunits.

It localises to the cytoplasm. The protein resides in the cytosol. The enzyme catalyses alpha-D-glucose 1-phosphate + ATP + H(+) = ADP-alpha-D-glucose + diphosphate. Its pathway is glycan biosynthesis; starch biosynthesis. Its activity is regulated as follows. Activated by 3'phosphoglycerate, inhibited by orthophosphate. Allosteric regulation. Inhibited by inorganic phosphate (Pi). Its function is as follows. Involved in synthesis of starch. Catalyzes the synthesis of ADP-glucose, a molecule that serves as an activated glycosyl donor for alpha-1,4-glucan synthesis. Essential for starch synthesis in seed endosperm. Is essential for both catalytic and allosteric regulatory properties of the cytosolic heterotetramer enzyme. This is Glucose-1-phosphate adenylyltransferase large subunit 2, cytosolic from Oryza sativa subsp. japonica (Rice).